A 459-amino-acid polypeptide reads, in one-letter code: GTPase Der (459 aa).

EngA-type G domains lie at 3–167 (FTFA…PEPE) and 188–363 (IRVA…AVWN). Residues 9–16 (GRPNVGKS), 56–60 (DTAGL), 119–122 (NKSE), 194–201 (GRPNAGKS), 241–245 (DTAGL), and 306–309 (NKWD) contribute to the GTP site. The KH-like domain maps to 364 to 448 (TRVSTAALNR…PVRITLREKA (85 aa)).

It belongs to the TRAFAC class TrmE-Era-EngA-EngB-Septin-like GTPase superfamily. EngA (Der) GTPase family. In terms of assembly, associates with the 50S ribosomal subunit.

Functionally, GTPase that plays an essential role in the late steps of ribosome biogenesis. The sequence is that of GTPase Der from Rhodopseudomonas palustris (strain HaA2).